A 444-amino-acid polypeptide reads, in one-letter code: NAD(P)-specific glutamate dehydrogenase (444 aa).

Substrate is bound by residues lysine 88, glutamine 109, and lysine 112. Catalysis depends on lysine 124, which acts as the Proton donor. Glycine 163 lines the substrate pocket. The NADP(+) site is built by threonine 207 and asparagine 238. Serine 376 serves as a coordination point for substrate.

The protein belongs to the Glu/Leu/Phe/Val dehydrogenases family. Homohexamer.

The enzyme catalyses L-glutamate + NAD(+) + H2O = 2-oxoglutarate + NH4(+) + NADH + H(+). It carries out the reaction L-glutamate + NADP(+) + H2O = 2-oxoglutarate + NH4(+) + NADPH + H(+). Functionally, catalyzes the reversible oxidative deamination of glutamate to alpha-ketoglutarate and ammonia. P.ruminicola possess both NADP(H)- and NAD(H)-dependent activities on the same enzyme, suggesting that both anabolic and catabolic forms of the enzyme might occur. This Xylanibacter ruminicola (Prevotella ruminicola) protein is NAD(P)-specific glutamate dehydrogenase (gdhA).